We begin with the raw amino-acid sequence, 61 residues long: Short neurotoxin 1 (61 aa).

Disulfide bonds link C3–C23, C17–C40, C42–C53, and C54–C59.

This sequence belongs to the three-finger toxin family. Short-chain subfamily. Type I alpha-neurotoxin sub-subfamily. Expressed by the venom gland.

The protein resides in the secreted. Its function is as follows. Binds with high affinity to muscular nicotinic acetylcholine receptors (nAChRs) (tested on Torpedo marmorata AChR, Kd=0.07 nM) and with low affinity to neuronal alpha-7/CHRNA7 nAChRs (tested on chimeric receptor, Kd=3 uM) and inhibit acetylcholine from binding to the receptor, thereby impairing neuromuscular transmission. Produces peripheral paralysis by blocking neuromuscular transmission at the postsynaptic site. The protein is Short neurotoxin 1 of Naja pallida (Red spitting cobra).